We begin with the raw amino-acid sequence, 389 residues long: Spore coat polysaccharide biosynthesis protein SpsC (389 aa).

Lysine 187 is subject to N6-(pyridoxal phosphate)lysine.

It belongs to the DegT/DnrJ/EryC1 family. It depends on pyridoxal 5'-phosphate as a cofactor.

Its pathway is spore coat biogenesis; spore coat polysaccharide biosynthesis. The chain is Spore coat polysaccharide biosynthesis protein SpsC (spsC) from Bacillus subtilis (strain 168).